A 61-amino-acid polypeptide reads, in one-letter code: Small ribosomal subunit protein uS14B (61 aa).

Positions 24, 27, 40, and 43 each coordinate Zn(2+).

It belongs to the universal ribosomal protein uS14 family. Zinc-binding uS14 subfamily. Part of the 30S ribosomal subunit. Contacts proteins S3 and S10. Zn(2+) serves as cofactor.

Its function is as follows. Binds 16S rRNA, required for the assembly of 30S particles and may also be responsible for determining the conformation of the 16S rRNA at the A site. The chain is Small ribosomal subunit protein uS14B from Pediococcus pentosaceus (strain ATCC 25745 / CCUG 21536 / LMG 10740 / 183-1w).